We begin with the raw amino-acid sequence, 479 residues long: Aspartyl/glutamyl-tRNA(Asn/Gln) amidotransferase subunit B (479 aa).

Belongs to the GatB/GatE family. GatB subfamily. As to quaternary structure, heterotrimer of A, B and C subunits.

It carries out the reaction L-glutamyl-tRNA(Gln) + L-glutamine + ATP + H2O = L-glutaminyl-tRNA(Gln) + L-glutamate + ADP + phosphate + H(+). The enzyme catalyses L-aspartyl-tRNA(Asn) + L-glutamine + ATP + H2O = L-asparaginyl-tRNA(Asn) + L-glutamate + ADP + phosphate + 2 H(+). In terms of biological role, allows the formation of correctly charged Asn-tRNA(Asn) or Gln-tRNA(Gln) through the transamidation of misacylated Asp-tRNA(Asn) or Glu-tRNA(Gln) in organisms which lack either or both of asparaginyl-tRNA or glutaminyl-tRNA synthetases. The reaction takes place in the presence of glutamine and ATP through an activated phospho-Asp-tRNA(Asn) or phospho-Glu-tRNA(Gln). The polypeptide is Aspartyl/glutamyl-tRNA(Asn/Gln) amidotransferase subunit B (Streptococcus suis (strain 98HAH33)).